We begin with the raw amino-acid sequence, 188 residues long: Peptide methionine sulfoxide reductase MsrA (188 aa).

The segment at 1–25 (MEGNEKAEQKNATSEESTDIFENPG) is disordered. The active site involves Cys37.

This sequence belongs to the MsrA Met sulfoxide reductase family.

The catalysed reaction is L-methionyl-[protein] + [thioredoxin]-disulfide + H2O = L-methionyl-(S)-S-oxide-[protein] + [thioredoxin]-dithiol. It carries out the reaction [thioredoxin]-disulfide + L-methionine + H2O = L-methionine (S)-S-oxide + [thioredoxin]-dithiol. Has an important function as a repair enzyme for proteins that have been inactivated by oxidation. Catalyzes the reversible oxidation-reduction of methionine sulfoxide in proteins to methionine. In Methanosarcina acetivorans (strain ATCC 35395 / DSM 2834 / JCM 12185 / C2A), this protein is Peptide methionine sulfoxide reductase MsrA.